Reading from the N-terminus, the 421-residue chain is Testin (421 aa).

One can recognise a PET domain in the interval 92–199; it reads MILTNPVAAK…GDVKLPCEMD (108 aa). The segment at 133–164 is disordered; the sequence is EKQPVAGSEGAQYRKKQLAKQLPAHDQDPSKC. Residues 155–164 are compositionally biased toward basic and acidic residues; that stretch reads PAHDQDPSKC. LIM zinc-binding domains follow at residues 234–297, 299–359, and 362–421; these read YSCY…CDSE, PRCA…NHAV, and QGCH…KMMS.

It belongs to the prickle / espinas / testin family. As to quaternary structure, interacts via LIM domain 1 with ZYX. Interacts (via LIM domain 3) with ENAH and VASP. Interacts with ALKBH4, talin, actin, alpha-actinin, GRIP1 and PXN. Interacts (via LIM domain 2) with ACTL7A (via N-terminus). Heterodimer with ACTL7A; the heterodimer interacts with ENAH to form a heterotrimer.

It is found in the cytoplasm. The protein localises to the cell junction. Its subcellular location is the focal adhesion. In terms of biological role, scaffold protein that may play a role in cell adhesion, cell spreading and in the reorganization of the actin cytoskeleton. Plays a role in the regulation of cell proliferation. May act as a tumor suppressor. This Colobus guereza (Mantled guereza) protein is Testin (TES).